Here is a 367-residue protein sequence, read N- to C-terminus: Phospho-N-acetylmuramoyl-pentapeptide-transferase (367 aa).

Transmembrane regions (helical) follow at residues 13–33 (ISGI…ALTL), 49–69 (LPLL…VPLL), 95–115 (MGGI…SNFA), 119–139 (LAVS…DWQI), 154–174 (LALQ…NQPA), 183–203 (WVSF…FVLV), 215–235 (IDGL…AIVA), 237–257 (TSPA…GFLA), 281–301 (AVAL…IFFV), and 347–367 (VSSF…IAPF).

It belongs to the glycosyltransferase 4 family. MraY subfamily. Mg(2+) is required as a cofactor.

Its subcellular location is the cell inner membrane. It catalyses the reaction UDP-N-acetyl-alpha-D-muramoyl-L-alanyl-gamma-D-glutamyl-meso-2,6-diaminopimeloyl-D-alanyl-D-alanine + di-trans,octa-cis-undecaprenyl phosphate = di-trans,octa-cis-undecaprenyl diphospho-N-acetyl-alpha-D-muramoyl-L-alanyl-D-glutamyl-meso-2,6-diaminopimeloyl-D-alanyl-D-alanine + UMP. It functions in the pathway cell wall biogenesis; peptidoglycan biosynthesis. Functionally, catalyzes the initial step of the lipid cycle reactions in the biosynthesis of the cell wall peptidoglycan: transfers peptidoglycan precursor phospho-MurNAc-pentapeptide from UDP-MurNAc-pentapeptide onto the lipid carrier undecaprenyl phosphate, yielding undecaprenyl-pyrophosphoryl-MurNAc-pentapeptide, known as lipid I. This chain is Phospho-N-acetylmuramoyl-pentapeptide-transferase, found in Trichormus variabilis (strain ATCC 29413 / PCC 7937) (Anabaena variabilis).